A 117-amino-acid chain; its full sequence is Ig heavy chain V region 102 (117 aa).

Residues 1–19 (MGWSCIILFLVATATGVHS) form the signal peptide. A framework-1 region spans residues 20 to 49 (HVQLQQPGAELVKPGASVKVSCKASGYTFT). A disulfide bridge links C41 with C115. The interval 50-54 (SYWMH) is complementarity-determining-1. The framework-2 stretch occupies residues 55 to 68 (WVKQRPGQGLEWIG). Residues 69 to 85 (RIHPSDSDTNYNQKFKG) are complementarity-determining-2. The tract at residues 86 to 117 (KATLTVDKSSSTAYMQLSSLTSEDSAVYYCAI) is framework-3.

In Mus musculus (Mouse), this protein is Ig heavy chain V region 102.